The primary structure comprises 637 residues: Multicopper oxidase LPR1 homolog 5 (637 aa).

The signal sequence occupies residues 1-21 (MSPRIQQLAAVLLAAVVVVAA). Asn100 carries N-linked (GlcNAc...) asparagine glycosylation. Residues His209 and His211 each contribute to the Cu cation site. An N-linked (GlcNAc...) asparagine glycan is attached at Asn234. Residues His257 and His259 each coordinate Cu cation. N-linked (GlcNAc...) asparagine glycans are attached at residues Asn308, Asn349, Asn357, Asn425, Asn482, and Asn516. One can recognise a Plastocyanin-like domain in the interval 334-406 (PYLSVQRRRY…IVDFSRLPAA (73 aa)). Cu cation contacts are provided by His522, His525, and His527. Asn553 carries N-linked (GlcNAc...) asparagine glycosylation. Residues His618, Cys619, His620, His624, and Met629 each contribute to the Cu cation site.

It belongs to the multicopper oxidase family. It depends on Cu cation as a cofactor. Highly expressed in roots and basal stems.

It localises to the endoplasmic reticulum membrane. Multicopper oxidase that may play a role in the maintenance of inorganic phosphate homeostasis. The protein is Multicopper oxidase LPR1 homolog 5 of Oryza sativa subsp. japonica (Rice).